The primary structure comprises 499 residues: Apolipoprotein N-acyltransferase (499 aa).

6 consecutive transmembrane segments (helical) span residues 18-38 (FSPY…LIIT), 50-70 (LGFL…YISI), 82-102 (IIII…FVIL), 105-125 (FFFP…AWMI), 156-176 (PIIG…MCVL), and 182-202 (SYYP…LNFF). Residues 217 to 461 (IQGNISQHTY…NDFLLEEVFS (245 aa)) form the CN hydrolase domain. The active-site Proton acceptor is E257. The active site involves K320. The Nucleophile role is filled by C372. Residues 476–496 (LLFFSIICFIISFFIKIKLIF) form a helical membrane-spanning segment.

It belongs to the CN hydrolase family. Apolipoprotein N-acyltransferase subfamily.

The protein localises to the cell membrane. The enzyme catalyses N-terminal S-1,2-diacyl-sn-glyceryl-L-cysteinyl-[lipoprotein] + a glycerophospholipid = N-acyl-S-1,2-diacyl-sn-glyceryl-L-cysteinyl-[lipoprotein] + a 2-acyl-sn-glycero-3-phospholipid + H(+). Its pathway is protein modification; lipoprotein biosynthesis (N-acyl transfer). Functionally, catalyzes the phospholipid dependent N-acylation of the N-terminal cysteine of apolipoprotein, the last step in lipoprotein maturation. In Wigglesworthia glossinidia brevipalpis, this protein is Apolipoprotein N-acyltransferase.